Consider the following 209-residue polypeptide: Uracil phosphoribosyltransferase (209 aa).

Residues Arg-79, Arg-104, and 131-139 (DPMLATGNS) each bind 5-phospho-alpha-D-ribose 1-diphosphate. Uracil is bound by residues Ile-194 and 199–201 (GDA). Asp-200 provides a ligand contact to 5-phospho-alpha-D-ribose 1-diphosphate.

This sequence belongs to the UPRTase family. Requires Mg(2+) as cofactor.

It carries out the reaction UMP + diphosphate = 5-phospho-alpha-D-ribose 1-diphosphate + uracil. The protein operates within pyrimidine metabolism; UMP biosynthesis via salvage pathway; UMP from uracil: step 1/1. Its activity is regulated as follows. Allosterically activated by GTP. In terms of biological role, catalyzes the conversion of uracil and 5-phospho-alpha-D-ribose 1-diphosphate (PRPP) to UMP and diphosphate. The protein is Uracil phosphoribosyltransferase of Acidovorax ebreus (strain TPSY) (Diaphorobacter sp. (strain TPSY)).